We begin with the raw amino-acid sequence, 78 residues long: Probable Fe(2+)-trafficking protein (78 aa).

Belongs to the Fe(2+)-trafficking protein family. Monomer.

Its function is as follows. Could be a mediator in iron transactions between iron acquisition and iron-requiring processes, such as synthesis and/or repair of Fe-S clusters in biosynthetic enzymes. The sequence is that of Probable Fe(2+)-trafficking protein from Buchnera aphidicola subsp. Schizaphis graminum (strain Sg).